The primary structure comprises 86 residues: Toxin 3FTx-Dis4 (86 aa).

Residues 1 to 19 (MKTLLLSLVMVGFMYLVSG) form the signal peptide. Cystine bridges form between cysteine 24-cysteine 45, cysteine 38-cysteine 63, and cysteine 79-cysteine 84.

It belongs to the three-finger toxin family. Ancestral subfamily. As to expression, expressed by the venom gland.

Its subcellular location is the secreted. The chain is Toxin 3FTx-Dis4 from Dispholidus typus (Boomslang).